A 247-amino-acid chain; its full sequence is Homeobox-leucine zipper protein HOX17 (247 aa).

Residues 58–81 (ERAGLRGGGGSDEEDGGCGIDGSR) are disordered. The segment at residues 79 to 138 (GSRKKLRLSKDQSAVLEDSFREHPTLNPRQKATLAQQLGLRPRQVEVWFQNRRARTKLKQ) is a DNA-binding region (homeobox). The leucine-zipper stretch occupies residues 137–182 (KQTEVDCEFLKRCCETLTEENRRLQKEVQELRALKLVSPHLYMNMS).

It belongs to the HD-ZIP homeobox family. Class II subfamily. In terms of tissue distribution, expressed in seedlings, roots, stems, leaf sheaths and blades and panicles.

Its subcellular location is the nucleus. Probable transcription factor. This chain is Homeobox-leucine zipper protein HOX17 (HOX17), found in Oryza sativa subsp. japonica (Rice).